The following is a 142-amino-acid chain: Cystatin-8 (142 aa).

The N-terminal stretch at 1 to 21 (MPRCRWLSLILLTIPLALVAR) is a signal peptide. 2 N-linked (GlcNAc...) asparagine glycosylation sites follow: Asn-27 and Asn-39. Residues 77-81 (QVTNL) carry the Secondary area of contact motif. 2 disulfide bridges follow: Cys-95–Cys-105 and Cys-119–Cys-139.

This sequence belongs to the cystatin family. In terms of tissue distribution, proximal caput region of the epididymis. Lower expression in the testis. Within the testis it is localized to the elongating spermatids, whereas within the epididymis it is exclusively synthesized by the proximal caput epithelium.

Its subcellular location is the secreted. Functionally, performs a specialized role during sperm development and maturation. In Homo sapiens (Human), this protein is Cystatin-8 (CST8).